A 238-amino-acid chain; its full sequence is Dolichyldiphosphatase 1 (238 aa).

4 consecutive transmembrane segments (helical) span residues 33–53, 100–120, 130–150, and 162–182; these read LAYL…LIIF, PSSH…FLYL, FLDL…AFLV, and WSQV…WFIF.

Belongs to the dolichyldiphosphatase family.

Its subcellular location is the endoplasmic reticulum membrane. The catalysed reaction is a di-trans,poly-cis-dolichyl diphosphate + H2O = a di-trans,poly-cis-dolichyl phosphate + phosphate + H(+). It functions in the pathway protein modification; protein glycosylation. In terms of biological role, required for efficient N-glycosylation. Necessary for maintaining optimal levels of dolichol-linked oligosaccharides. Hydrolyzes dolichyl pyrophosphate at a very high rate and dolichyl monophosphate at a much lower rate. Does not act on phosphatidate. The polypeptide is Dolichyldiphosphatase 1 (DOLPP1) (Plecturocebus moloch (Dusky titi monkey)).